A 180-amino-acid polypeptide reads, in one-letter code: Adenine phosphoribosyltransferase (180 aa).

The protein belongs to the purine/pyrimidine phosphoribosyltransferase family. As to quaternary structure, homodimer.

Its subcellular location is the cytoplasm. It catalyses the reaction AMP + diphosphate = 5-phospho-alpha-D-ribose 1-diphosphate + adenine. It participates in purine metabolism; AMP biosynthesis via salvage pathway; AMP from adenine: step 1/1. Functionally, catalyzes a salvage reaction resulting in the formation of AMP, that is energically less costly than de novo synthesis. This Pasteurella multocida (strain Pm70) protein is Adenine phosphoribosyltransferase.